The primary structure comprises 319 residues: Cell surface A33 antigen (319 aa).

The signal sequence occupies residues 1–21; the sequence is MVGKMWPVLWTLCAVRVTVDA. Residues 22–134 enclose the Ig-like V-type domain; it reads ISVETPQDVL…LEGNTKSRVR (113 aa). At 22 to 235 the chain is on the extracellular side; sequence ISVETPQDVL…VAVRSPSMNV (214 aa). 3 disulfides stabilise this stretch: C43–C117, C146–C222, and C162–C211. N-linked (GlcNAc...) asparagine glycans are attached at residues N112, N200, and N223. The Ig-like C2-type domain maps to 140-227; the sequence is PPSKPECGIE…GTQFCNITVA (88 aa). Residues 236 to 256 form a helical membrane-spanning segment; it reads ALYVGIAVGVVAALIIIGIII. At 257–319 the chain is on the cytoplasmic side; it reads YCCCCRGKDD…GRESPDHLDQ (63 aa). Basic and acidic residues-rich tracts occupy residues 267–295 and 303–319; these read NTED…SRER and QEEQ…HLDQ. The segment at 267 to 319 is disordered; that stretch reads NTEDKEDARPNREAYEEPPEQLRELSREREEEDDYRQEEQRSTGRESPDHLDQ.

N-glycosylated, contains approximately 8 kDa of N-linked carbohydrate. In terms of processing, palmitoylated. In terms of tissue distribution, expressed in normal gastrointestinal epithelium and in 95% of colon cancers.

It localises to the membrane. May play a role in cell-cell recognition and signaling. The chain is Cell surface A33 antigen (GPA33) from Homo sapiens (Human).